A 510-amino-acid polypeptide reads, in one-letter code: Light-independent protochlorophyllide reductase subunit B (510 aa).

Asp-36 is a binding site for [4Fe-4S] cluster. Asp-296 serves as the catalytic Proton donor. A substrate-binding site is contributed by 431–432 (GM).

This sequence belongs to the ChlB/BchB/BchZ family. Protochlorophyllide reductase is composed of three subunits; ChlL, ChlN and ChlB. Forms a heterotetramer of two ChlB and two ChlN subunits. The cofactor is [4Fe-4S] cluster.

The protein resides in the plastid. It is found in the chloroplast. It carries out the reaction chlorophyllide a + oxidized 2[4Fe-4S]-[ferredoxin] + 2 ADP + 2 phosphate = protochlorophyllide a + reduced 2[4Fe-4S]-[ferredoxin] + 2 ATP + 2 H2O. The protein operates within porphyrin-containing compound metabolism; chlorophyll biosynthesis (light-independent). Functionally, component of the dark-operative protochlorophyllide reductase (DPOR) that uses Mg-ATP and reduced ferredoxin to reduce ring D of protochlorophyllide (Pchlide) to form chlorophyllide a (Chlide). This reaction is light-independent. The NB-protein (ChlN-ChlB) is the catalytic component of the complex. The polypeptide is Light-independent protochlorophyllide reductase subunit B (Auxenochlorella protothecoides (Green microalga)).